The sequence spans 418 residues: Phosphoglycerate kinase (418 aa).

Valine 24, aspartate 25, phenylalanine 26, asparagine 27, arginine 40, serine 63, histidine 64, glycine 66, arginine 67, leucine 122, arginine 123, histidine 169, and arginine 170 together coordinate (2R)-3-phosphoglycerate. Residue glycine 213 coordinates ADP. Glycine 213 contributes to the CDP binding site. AMP is bound by residues alanine 214 and lysine 215. An ATP-binding site is contributed by alanine 214. Alanine 214 contacts Mg(2+). Mg(2+) is bound by residues alanine 217 and aspartate 218. Residue aspartate 218 coordinates CDP. An AMP-binding site is contributed by lysine 219. Residue lysine 219 participates in ATP binding. Glycine 237 provides a ligand contact to ADP. Glycine 237 lines the CDP pocket. Glycine 238 and glycine 312 together coordinate AMP. The ATP site is built by glycine 238 and glycine 312. The CDP site is built by glycine 337 and phenylalanine 342. Phenylalanine 342 contacts ADP. Residue glutamate 343 coordinates AMP. Residues glutamate 343, aspartate 374, and threonine 375 each contribute to the ATP site. Aspartate 374 serves as a coordination point for Mg(2+).

Belongs to the phosphoglycerate kinase family. Monomer. Mg(2+) is required as a cofactor.

The enzyme catalyses (2R)-3-phosphoglycerate + ATP = (2R)-3-phospho-glyceroyl phosphate + ADP. It functions in the pathway carbohydrate degradation; glycolysis; pyruvate from D-glyceraldehyde 3-phosphate: step 2/5. This is Phosphoglycerate kinase (PGK) from Euplotes crassus.